Consider the following 510-residue polypeptide: Histidine ammonia-lyase (510 aa).

Positions 143 to 145 (ASG) form a cross-link, 5-imidazolinone (Ala-Gly). The residue at position 144 (Ser-144) is a 2,3-didehydroalanine (Ser).

This sequence belongs to the PAL/histidase family. Post-translationally, contains an active site 4-methylidene-imidazol-5-one (MIO), which is formed autocatalytically by cyclization and dehydration of residues Ala-Ser-Gly.

It is found in the cytoplasm. It catalyses the reaction L-histidine = trans-urocanate + NH4(+). Its pathway is amino-acid degradation; L-histidine degradation into L-glutamate; N-formimidoyl-L-glutamate from L-histidine: step 1/3. In Yersinia pseudotuberculosis serotype I (strain IP32953), this protein is Histidine ammonia-lyase.